Consider the following 301-residue polypeptide: Protein ARMCX6 (301 aa).

The segment at Met-1–Glu-6 is mitochondrion outer membrane (MOM)-targeting sequence. The Mitochondrial intermembrane portion of the chain corresponds to Met-1–Met-7. The helical; Signal-anchor transmembrane segment at Gly-8 to Tyr-25 threads the bilayer. Positions Lys-26 to Glu-36 are mitochondrion outer membrane (MOM)-targeting sequence. The Cytoplasmic portion of the chain corresponds to Lys-26–Pro-301. The disordered stretch occupies residues Ser-70 to Phe-105.

It belongs to the eutherian X-chromosome-specific Armcx family.

It is found in the mitochondrion. The protein resides in the mitochondrion outer membrane. Its function is as follows. May regulate the dynamics and distribution of mitochondria in neural cells. The chain is Protein ARMCX6 (Armcx6) from Rattus norvegicus (Rat).